The following is a 167-amino-acid chain: Small ribosomal subunit protein uS9 (167 aa).

Disordered stretches follow at residues 1–45 (MSEY…GGAT) and 137–167 (KAGF…FSKR). The segment covering 9–19 (DTVEDITESDE) has biased composition (acidic residues). The span at 20–36 (FTGTYTSESSTPATGGN) shows a compositional bias: polar residues. A compositionally biased stretch (basic and acidic residues) spans 143–152 (RDPRATERKK). Residues 153–167 (AGLKKARKAPQFSKR) show a composition bias toward basic residues.

This sequence belongs to the universal ribosomal protein uS9 family.

The chain is Small ribosomal subunit protein uS9 from Kineococcus radiotolerans (strain ATCC BAA-149 / DSM 14245 / SRS30216).